Here is a 434-residue protein sequence, read N- to C-terminus: Lecithin-cholesterol acyltransferase-like 1 (434 aa).

Ser191 acts as the Acyl-ester intermediate in catalysis. Catalysis depends on charge relay system residues Asp354 and His386.

The protein belongs to the AB hydrolase superfamily. Lipase family.

The chain is Lecithin-cholesterol acyltransferase-like 1 from Oryza sativa subsp. japonica (Rice).